Reading from the N-terminus, the 216-residue chain is Probable GTP-binding protein EngB (216 aa).

The EngB-type G domain maps to 26–200 (EGIEIAFAGR…RAKLDTWFAP (175 aa)). GTP contacts are provided by residues 34-41 (GRSNAGKS), 61-65 (GRTQL), 79-82 (DLPG), 146-149 (TKAD), and 179-181 (YSS). 2 residues coordinate Mg(2+): Ser-41 and Thr-63.

It belongs to the TRAFAC class TrmE-Era-EngA-EngB-Septin-like GTPase superfamily. EngB GTPase family. Mg(2+) serves as cofactor.

In terms of biological role, necessary for normal cell division and for the maintenance of normal septation. The sequence is that of Probable GTP-binding protein EngB from Vibrio vulnificus (strain YJ016).